Here is a 495-residue protein sequence, read N- to C-terminus: Type-1 histone deacetylase 1 (495 aa).

D94 contacts substrate. Residue H136 is the Proton acceptor of the active site. G144 is a substrate binding site. A divalent metal cation contacts are provided by D171, H173, and D259. Y298 is a substrate binding site. Residues 372-495 (PAAAHHDIPP…EDADVDMDSG (124 aa)) are disordered. Positions 396-413 (DVRISEADRDKKVHHQGE) are enriched in basic and acidic residues. The segment covering 425-443 (NYSNGLEATSTSRRNQVSI) has biased composition (polar residues). A compositionally biased stretch (low complexity) spans 454-480 (NSRNNNNNNNNNNNNNNNNNNNSNNNN).

It belongs to the histone deacetylase family. HD type 1 subfamily.

The protein resides in the nucleus. It is found in the cytoplasm. It carries out the reaction N(6)-acetyl-L-lysyl-[histone] + H2O = L-lysyl-[histone] + acetate. In terms of biological role, responsible for the deacetylation of lysine residues on the N-terminal part of the core histones (H2A, H2B, H3 and H4). Histone deacetylation plays an important role in transcriptional regulation, cell cycle progression and developmental events. Histone deacetylases act via the formation of large multiprotein complexes. This is Type-1 histone deacetylase 1 (hdaA) from Dictyostelium discoideum (Social amoeba).